A 131-amino-acid polypeptide reads, in one-letter code: Holo-[acyl-carrier-protein] synthase (131 aa).

Mg(2+)-binding residues include D6 and E55.

The protein belongs to the P-Pant transferase superfamily. AcpS family. The cofactor is Mg(2+).

It is found in the cytoplasm. It catalyses the reaction apo-[ACP] + CoA = holo-[ACP] + adenosine 3',5'-bisphosphate + H(+). Functionally, transfers the 4'-phosphopantetheine moiety from coenzyme A to a Ser of acyl-carrier-protein. This chain is Holo-[acyl-carrier-protein] synthase, found in Verminephrobacter eiseniae (strain EF01-2).